Here is a 575-residue protein sequence, read N- to C-terminus: Sulfite reductase [NADPH] hemoprotein beta-component (575 aa).

Cysteine 439, cysteine 445, cysteine 484, and cysteine 488 together coordinate [4Fe-4S] cluster. Siroheme is bound at residue cysteine 488.

The protein belongs to the nitrite and sulfite reductase 4Fe-4S domain family. In terms of assembly, alpha(8)-beta(8). The alpha component is a flavoprotein, the beta component is a hemoprotein. Requires siroheme as cofactor. It depends on [4Fe-4S] cluster as a cofactor.

The enzyme catalyses hydrogen sulfide + 3 NADP(+) + 3 H2O = sulfite + 3 NADPH + 4 H(+). The protein operates within sulfur metabolism; hydrogen sulfide biosynthesis; hydrogen sulfide from sulfite (NADPH route): step 1/1. Component of the sulfite reductase complex that catalyzes the 6-electron reduction of sulfite to sulfide. This is one of several activities required for the biosynthesis of L-cysteine from sulfate. The chain is Sulfite reductase [NADPH] hemoprotein beta-component from Blochmanniella pennsylvanica (strain BPEN).